Here is a 694-residue protein sequence, read N- to C-terminus: Elongation factor G (694 aa).

A tr-type G domain is found at 12 to 286; sequence SKLRNIGIMA…AVVDYLPSPI (275 aa). GTP-binding positions include 21-28, 85-89, and 139-142; these read AHIDAGKT, DTPGH, and NKMD.

The protein belongs to the TRAFAC class translation factor GTPase superfamily. Classic translation factor GTPase family. EF-G/EF-2 subfamily.

Its subcellular location is the cytoplasm. Catalyzes the GTP-dependent ribosomal translocation step during translation elongation. During this step, the ribosome changes from the pre-translocational (PRE) to the post-translocational (POST) state as the newly formed A-site-bound peptidyl-tRNA and P-site-bound deacylated tRNA move to the P and E sites, respectively. Catalyzes the coordinated movement of the two tRNA molecules, the mRNA and conformational changes in the ribosome. This Pseudothermotoga lettingae (strain ATCC BAA-301 / DSM 14385 / NBRC 107922 / TMO) (Thermotoga lettingae) protein is Elongation factor G.